A 476-amino-acid chain; its full sequence is Proline--tRNA ligase 2 (476 aa).

Belongs to the class-II aminoacyl-tRNA synthetase family. ProS type 3 subfamily. In terms of assembly, homodimer.

It is found in the cytoplasm. The catalysed reaction is tRNA(Pro) + L-proline + ATP = L-prolyl-tRNA(Pro) + AMP + diphosphate. Its function is as follows. Catalyzes the attachment of proline to tRNA(Pro) in a two-step reaction: proline is first activated by ATP to form Pro-AMP and then transferred to the acceptor end of tRNA(Pro). This Bacillus thuringiensis (strain Al Hakam) protein is Proline--tRNA ligase 2.